Consider the following 207-residue polypeptide: MSAKKASQPMLNTTGSLQEGEMGKMFHGKCLRIVSPESPAKLYCCYGVIMVLSVAVVALSVALSVKMTPQISTINTYAACPRNWIGVGNKCFYFSEYASNWTFSQTFCKAQEAELARFDTEEELNFLSRYKGSFDYWIGLHRESSEHPWKWTDNTQYNYSLSIRGVERYAYLNDIGISSARVYADKRWSCSKLNSYSLQCKTPFSPM.

The Cytoplasmic portion of the chain corresponds to 1–44 (MSAKKASQPMLNTTGSLQEGEMGKMFHGKCLRIVSPESPAKLYC). Phosphoserine is present on residues Ser-7 and Ser-16. A helical; Signal-anchor for type II membrane protein membrane pass occupies residues 45–65 (CYGVIMVLSVAVVALSVALSV). Topologically, residues 66-207 (KMTPQISTIN…LQCKTPFSPM (142 aa)) are extracellular. The C-type lectin domain occupies 87–198 (VGNKCFYFSE…SCSKLNSYSL (112 aa)). The N-linked (GlcNAc...) asparagine glycan is linked to Asn-100.

The protein resides in the cell membrane. Receptor for KLRB1B that protects target cells against natural killer cell-mediated lysis. The chain is C-type lectin domain family 2 member D11 (Clec2d11) from Rattus norvegicus (Rat).